The primary structure comprises 360 residues: Photosystem II protein D1 1 (360 aa).

Topologically, residues 2–31 (TTTLQRRESANLWERFCNWVTSTDNRLYVG) are cytoplasmic. A helical transmembrane segment spans residues 32–53 (WFGVIMIPTLLAATICFVIAFI). At 54-110 (AAPPVDIDGIREPVSGSLLYGNNIITGAVVPSSNAIGLHFYPIWEAASLDEWLYNGG) the chain is on the lumenal side. Residues 111–132 (PYQLIIFHFLLGASCYMGRQWE) form a helical membrane-spanning segment. Chlorophyll a is bound at residue H118. The pheophytin a site is built by Y126 and Q130. Residues 133 to 142 (LSYRLGMRPW) lie on the Cytoplasmic side of the membrane. A helical membrane pass occupies residues 143-163 (ICVAYSAPLASAFAVFLIYPI). Y147 is a binding site for pheophytin a. Residues 164–191 (GQGSFSDGMPLGISGTFNFMIVFQAEHN) lie on the Lumenal side of the membrane. Positions 170 and 189 each coordinate [CaMn4O5] cluster. Residues 192–217 (ILMHPFHQLGVAGVFGGALFCAMHGS) traverse the membrane as a helical segment. A chlorophyll a-binding site is contributed by H198. Residues H215 and 264 to 265 (SF) each bind a quinone. H215 lines the Fe cation pocket. The Cytoplasmic segment spans residues 218–272 (LVTSSLIRETTETESANYGYKFGQEEETYNIVAAHGYFGRLIFQYASFNNSRSLH). H272 is a binding site for Fe cation. The chain crosses the membrane as a helical span at residues 273–295 (FFLAAWPVVGVWFTALGISTMAF). Over 296-344 (NLNGFNFNHSVIDAKGNVINTWADIINRANLGMEVMHERNAHNFPLDLA) the chain is Lumenal. H332, E333, D342, and A344 together coordinate [CaMn4O5] cluster. Positions 345 to 360 (SAESAPVAMIAPSING) are excised as a propeptide.

This sequence belongs to the reaction center PufL/M/PsbA/D family. As to quaternary structure, PSII is composed of 1 copy each of membrane proteins PsbA, PsbB, PsbC, PsbD, PsbE, PsbF, PsbH, PsbI, PsbJ, PsbK, PsbL, PsbM, PsbT, PsbX, PsbY, PsbZ, Psb30/Ycf12, peripheral proteins PsbO, CyanoQ (PsbQ), PsbU, PsbV and a large number of cofactors. It forms dimeric complexes. Precursor protein interacts with Ycf48. Part of a photosystem II (PSII) assembly intermediate complex PSII-I; crystallized from a strain deleted of psbJ, it forms monomeric PSII before addition of the oxygen evolving complex. PSII-I includes 3 assembly factors not found in mature PSII (Psb27, Psb28 and Psb34). In PSII-I the C-terminus of D1 (this subunit) is already processed but not yet found at its final position. The cofactor is The D1/D2 heterodimer binds P680, chlorophylls that are the primary electron donor of PSII, and subsequent electron acceptors. It shares a non-heme iron and each subunit binds pheophytin, quinone, additional chlorophylls, carotenoids and lipids. D1 provides most of the ligands for the Mn4-Ca-O5 cluster of the oxygen-evolving complex (OEC). There is also a Cl(-1) ion associated with D1 and D2, which is required for oxygen evolution. PSII binds additional chlorophylls, carotenoids and specific lipids.. Post-translationally, C-terminally processed by CtpA; processing is essential to allow assembly of the oxygen-evolving complex and thus photosynthetic growth. In terms of processing, tyr-161 forms a radical intermediate that is referred to as redox-active TyrZ, YZ or Y-Z.

It is found in the cellular thylakoid membrane. It catalyses the reaction 2 a plastoquinone + 4 hnu + 2 H2O = 2 a plastoquinol + O2. Functionally, photosystem II (PSII) is a light-driven water:plastoquinone oxidoreductase that uses light energy to abstract electrons from H(2)O, generating O(2) and a proton gradient subsequently used for ATP formation. It consists of a core antenna complex that captures photons, and an electron transfer chain that converts photonic excitation into a charge separation. The D1/D2 (PsbA/PsbD) reaction center heterodimer binds P680, the primary electron donor of PSII as well as several subsequent electron acceptors. The chain is Photosystem II protein D1 1 from Thermosynechococcus vestitus (strain NIES-2133 / IAM M-273 / BP-1).